Here is a 374-residue protein sequence, read N- to C-terminus: MAFDLPNDFRCPISLEIMSDPVILQSGHTFDRVSIQQWIDSGNRTCPITKLPLSETPYLIPNHALRSLILNFAHVSLKESSRPRTQQEHSHSQSQALISTLVSQSSSNASKLESLTRLVRLTKRDSSIRRKVTESGAVRAALDCVDSCNQVLQEKSLSLLLNLSLEDDNKVGLVADGVIRRIVTVLRVGSPDCKAIAATLLTSLAVVEVNKATIGSYPDAISALVSLLRVGNDRERKESATALYALCSFPDNRKRVVDCGSVPILVEAADSGLERAVEVLGLLVKCRGGREEMSKVSGFVEVLVNVLRNGNLKGIQYSLFILNCLCCCSGEIVDEVKREGVVEICFGFEDNESEKIRRNATILVHTLLGIPMSS.

Residues 4–79 (DLPNDFRCPI…LNFAHVSLKE (76 aa)) form the U-box domain. ARM repeat units follow at residues 126–165 (SSIR…NLSL), 167–206 (DDNK…SLAV), 208–248 (EVNK…ALCS), 250–288 (PDNR…KCRG), and 289–327 (GREE…CLCC).

Expressed in the whole plant.

It catalyses the reaction S-ubiquitinyl-[E2 ubiquitin-conjugating enzyme]-L-cysteine + [acceptor protein]-L-lysine = [E2 ubiquitin-conjugating enzyme]-L-cysteine + N(6)-ubiquitinyl-[acceptor protein]-L-lysine.. It participates in protein modification; protein ubiquitination. Functions as an E3 ubiquitin ligase. Involved in the age-dependent pseudo-self-compatibility process. This Arabidopsis thaliana (Mouse-ear cress) protein is U-box domain-containing protein 8 (PUB8).